A 316-amino-acid polypeptide reads, in one-letter code: Pantothenate kinase (316 aa).

95–102 (GSVAVGKS) is a binding site for ATP.

This sequence belongs to the prokaryotic pantothenate kinase family.

It localises to the cytoplasm. It carries out the reaction (R)-pantothenate + ATP = (R)-4'-phosphopantothenate + ADP + H(+). It functions in the pathway cofactor biosynthesis; coenzyme A biosynthesis; CoA from (R)-pantothenate: step 1/5. This chain is Pantothenate kinase, found in Escherichia coli O17:K52:H18 (strain UMN026 / ExPEC).